The sequence spans 137 residues: Small ribosomal subunit protein uS9 (137 aa).

The disordered stretch occupies residues proline 104 to arginine 137. The segment covering lysine 118–arginine 137 has biased composition (basic residues).

It belongs to the universal ribosomal protein uS9 family.

This Gloeothece citriformis (strain PCC 7424) (Cyanothece sp. (strain PCC 7424)) protein is Small ribosomal subunit protein uS9.